The primary structure comprises 177 residues: Large ribosomal subunit protein uL6 (177 aa).

Belongs to the universal ribosomal protein uL6 family. Part of the 50S ribosomal subunit.

Functionally, this protein binds to the 23S rRNA, and is important in its secondary structure. It is located near the subunit interface in the base of the L7/L12 stalk, and near the tRNA binding site of the peptidyltransferase center. This chain is Large ribosomal subunit protein uL6, found in Methanothermobacter thermautotrophicus (strain ATCC 29096 / DSM 1053 / JCM 10044 / NBRC 100330 / Delta H) (Methanobacterium thermoautotrophicum).